Consider the following 276-residue polypeptide: MAIKTYKPYTPSRRFMSVLDSKDITAKSSVKGLLTKLKATAGRNNNGRITSRHKERGAKKLYRIIDFKRNKYNIEGKVVAIEYDPYRNARIALVVYPDGDKRYILQPSGLKVGDSVIAAEGGLDIKVGFAMKLKNIPIGTVVHNIEMHPGAGGQLARSAGMSAQIMGRENKYTIIRMPSSEMRYILSECMASIGVVGNEDFINVSIGKAGRNRHRGIRPQTRGSAMNPVDHPHGGGEGKTGTSGHPVSPWGTPAKGYKTRKKKASDKLIISRKKHK.

The interval 212–276 (NRHRGIRPQT…KLIISRKKHK (65 aa)) is disordered. Basic residues predominate over residues 257 to 276 (YKTRKKKASDKLIISRKKHK).

This sequence belongs to the universal ribosomal protein uL2 family. In terms of assembly, part of the 50S ribosomal subunit. Forms a bridge to the 30S subunit in the 70S ribosome.

In terms of biological role, one of the primary rRNA binding proteins. Required for association of the 30S and 50S subunits to form the 70S ribosome, for tRNA binding and peptide bond formation. It has been suggested to have peptidyltransferase activity; this is somewhat controversial. Makes several contacts with the 16S rRNA in the 70S ribosome. This is Large ribosomal subunit protein uL2 from Helicobacter acinonychis (strain Sheeba).